The chain runs to 102 residues: Colipase-like protein 2 (102 aa).

A signal peptide spans 1–23 (MAFTQALVTVLALLAGTLPHRHS). 5 disulfide bridges follow: Cys36-Cys47, Cys42-Cys58, Cys46-Cys80, Cys68-Cys88, and Cys82-Cys99.

Belongs to the colipase family.

Its subcellular location is the secreted. In Mus musculus (Mouse), this protein is Colipase-like protein 2 (Clpsl2).